The following is a 232-amino-acid chain: Cobalt transport protein CbiM (232 aa).

6 helical membrane-spanning segments follow: residues 6–26 (GFLPPAHAIAWGVASAPFVVH), 43–63 (LLLGASGAFTFVLSALKLPSV), 84–104 (IMAVLGTITLLFQALLLAHGG), 107–127 (TLGANVFSMAIVGPWAGYGVY), 135–155 (VPLMVTVFFGAFVADLSTYCV), and 181–201 (IFAVTQIPLAVSEGLLTVIVM).

It belongs to the CbiM family. As to quaternary structure, forms an energy-coupling factor (ECF) transporter complex composed of an ATP-binding protein (A component, CbiO), a transmembrane protein (T component, CbiQ) and 2 possible substrate-capture proteins (S components, CbiM and CbiN) of unknown stoichimetry.

It localises to the cell membrane. The protein operates within cofactor biosynthesis; adenosylcobalamin biosynthesis. Functionally, part of the energy-coupling factor (ECF) transporter complex CbiMNOQ involved in cobalt import. This Streptomyces coelicolor (strain ATCC BAA-471 / A3(2) / M145) protein is Cobalt transport protein CbiM.